The primary structure comprises 54 residues: Ovomucoid (54 aa).

Positions 4–54 constitute a Kazal-like domain; the sequence is VDCSDYPKPACTLEYMPLCGSDNKTYGNKCNFCNAVVDSNGTLTLSHFGKC. 3 cysteine pairs are disulfide-bonded: Cys6–Cys36, Cys14–Cys33, and Cys22–Cys54. Asn43 carries N-linked (GlcNAc...) asparagine glycosylation.

It localises to the secreted. The sequence is that of Ovomucoid from Dendrocygna arcuata (Wandering whistling-duck).